A 563-amino-acid chain; its full sequence is Beta-catenin-like protein 1 (563 aa).

M1 carries the post-translational modification N-acetylmethionine. The disordered stretch occupies residues 1–49 (MDVGELLSYQPNRGTKRPRDDEEEELKMRRRQAGTRERGRYREEEMTVV). Positions 16 to 33 (KRPRDDEEEELKMRRRQA) match the Nuclear localization signal motif. The span at 34 to 45 (GTRERGRYREEE) shows a compositional bias: basic and acidic residues. 2 HEAT repeats span residues 79 to 129 (ESSV…VVAT) and 134 to 176 (YHLL…TLHE). K91 is subject to N6-acetyllysine. Residues 130-140 (MPDLYHLLVEL) carry the Nuclear export signal (NES) motif. 5 ARM repeats span residues 178 to 228 (EEGA…MAEF), 229 to 273 (RPEM…LQDN), 274 to 323 (DENR…CLML), 325 to 363 (SNRERFLKGEGLQLMNLMLREKKISRSSALKVLDHAMIG), and 364 to 417 (PEGT…LLRN). At S389 the chain carries Phosphoserine. Residues 476 to 540 (DIEDEFYLRR…HIIKEYAENI (65 aa)) adopt a coiled-coil conformation. S545 carries the post-translational modification Phosphoserine.

In terms of assembly, component of the PRP19-CDC5L splicing complex composed of a core complex comprising a homotetramer of PRPF19, CDC5L, PLRG1 and BCAS2, and at least three less stably associated proteins CTNNBL1, CWC15 and HSPA8. Interacts directly with CWC15 and CDC5L in the complex. Interacts with AICDA; the interaction is important for the antibody diversification activity of AICDA. Interacts with PRPF31 (via its NLS). Interacts (via its N-terminal NLS) with KPNA1 and KPNA2.

The protein resides in the nucleus. Functionally, component of the PRP19-CDC5L complex that forms an integral part of the spliceosome and is required for activating pre-mRNA splicing. Participates in AID/AICDA-mediated somatic hypermutation (SHM) and class-switch recombination (CSR), 2 processes resulting in the production of high-affinity, mutated isotype-switched antibodies. The polypeptide is Beta-catenin-like protein 1 (CTNNBL1) (Bos taurus (Bovine)).